Reading from the N-terminus, the 541-residue chain is Zinc finger protein 513 (541 aa).

Residues 1–118 form a disordered region; the sequence is MPRRKQSHPQ…GEARGERPGP (118 aa). Positions 44–55 are enriched in acidic residues; that stretch reads LEFEEEEEEDEG. 2 positions are modified to phosphoserine: Ser85 and Ser96. The span at 103-115 shows a compositional bias: basic and acidic residues; it reads EPARGPGEARGER. 8 C2H2-type zinc fingers span residues 150 to 172, 178 to 200, 206 to 228, 360 to 382, 388 to 410, 416 to 438, 444 to 466, and 472 to 494; these read YSCR…MQTH, FRCG…TRTH, YRCP…QRTH, FACS…MKTH, FRCA…QRVH, YKCP…GRIH, FRCS…MLRH, and FRCA…QKVH. Residues 492–541 are disordered; the sequence is KVHGHGGAGGPGLSAPEGWAPPHSPPSVLSTRGPAALGATGSRALHSDSP.

Belongs to the krueppel C2H2-type zinc-finger protein family. In terms of assembly, binds DNA. Can associate with the proximal promoter regions of PAX6 and SP4, and their known targets including ARR3, RHO, OPN1MW2 and OPN1SW. In terms of tissue distribution, widely expressed. In the eye, expression is greatest in the retina and least in the lens and cornea.

The protein resides in the nucleus. In terms of biological role, transcriptional regulator that plays a role in retinal development and maintenance. The chain is Zinc finger protein 513 (Znf513) from Mus musculus (Mouse).